Consider the following 56-residue polypeptide: Bacteriocin sublancin-168 (56 aa).

A propeptide spanning residues 1 to 19 is cleaved from the precursor; sequence MEKLFKEVKLEELENQKGS. 2 cysteine pairs are disulfide-bonded: cysteine 26-cysteine 55 and cysteine 33-cysteine 48. Cysteine 41 is a glycosylation site (S-linked (Glc) cysteine; by host).

In terms of assembly, monomer. Production of active sublancin-168 requires at least one thiol-disulfide oxidoreductase (BdbB or, in its absence, BdbC). Membrane translocation and cleavage of the precursor are probably performed by SunT.

It is found in the secreted. In terms of biological role, bacteriocin active against Gram-positive bacteria. Inhibits B.cereus spore outgrowth, after the germination stage, approximately 1000-fold better than it inhibits exponential growth of the same cells. Inhibits B.subtilis strain ATCC 6633. This Bacillus pumilus (Bacillus mesentericus) protein is Bacteriocin sublancin-168 (sunA).